A 455-amino-acid chain; its full sequence is 23S rRNA (uracil(1939)-C(5))-methyltransferase RlmD (455 aa).

The region spanning 12-70 (SKQLSAKLSLSVTQLDHLGAGIAQHQGKIVFIPGVLPGETATVQFVEQKKSYAKAKLIS) is the TRAM domain. 4 residues coordinate [4Fe-4S] cluster: Cys83, Cys89, Cys92, and Cys174. The S-adenosyl-L-methionine site is built by Gln288, Phe317, Asn322, Glu338, Asp365, and Asp385. Catalysis depends on Cys411, which acts as the Nucleophile.

Belongs to the class I-like SAM-binding methyltransferase superfamily. RNA M5U methyltransferase family. RlmD subfamily.

It carries out the reaction uridine(1939) in 23S rRNA + S-adenosyl-L-methionine = 5-methyluridine(1939) in 23S rRNA + S-adenosyl-L-homocysteine + H(+). In terms of biological role, catalyzes the formation of 5-methyl-uridine at position 1939 (m5U1939) in 23S rRNA. This is 23S rRNA (uracil(1939)-C(5))-methyltransferase RlmD from Shewanella frigidimarina (strain NCIMB 400).